The chain runs to 100 residues: Protein Tat (100 aa).

Positions 1–20 (MEPVNPSLEPWKHPGSQPKT) are disordered. The tract at residues 1 to 24 (MEPVNPSLEPWKHPGSQPKTACTN) is interaction with human CREBBP. Residues 1–48 (MEPVNPSLEPWKHPGSQPKTACTNCYCKKCCFHCQACFITKGLGISYG) form a transactivation region. Cys22, Cys25, and Cys27 together coordinate Zn(2+). Residues 22-37 (CTNCYCKKCCFHCQAC) form a cysteine-rich region. At Lys28 the chain carries N6-acetyllysine; by host PCAF. Residues Cys30, His33, Cys34, and Cys37 each coordinate Zn(2+). Residues 38-48 (FITKGLGISYG) form a core region. The disordered stretch occupies residues 47-100 (YGRKKRRQRRRPPQDSQTHQVSLSKPSSQPRGDPTGPKEQKKKVERETETDPVH). A compositionally biased stretch (basic residues) spans 48-57 (GRKKRRQRRR). The Nuclear localization signal, RNA-binding (TAR), and protein transduction motif lies at 49–57 (RKKRRQRRR). Residues 49 to 85 (RKKRRQRRRPPQDSQTHQVSLSKPSSQPRGDPTGPKE) are interaction with the host capping enzyme RNGTT. Lys50 and Lys51 each carry N6-acetyllysine; by host EP300 and GCN5L2. Residues Arg52 and Arg53 each carry the asymmetric dimethylarginine; by host PRMT6 modification. Residues 61-76 (DSQTHQVSLSKPSSQP) are compositionally biased toward polar residues. Lys71 participates in a covalent cross-link: Glycyl lysine isopeptide (Lys-Gly) (interchain with G-Cter in ubiquitin). The Cell attachment site motif lies at 77–79 (RGD). Residues 82 to 100 (GPKEQKKKVERETETDPVH) are compositionally biased toward basic and acidic residues.

Belongs to the lentiviruses Tat family. As to quaternary structure, interacts with host CCNT1. Associates with the P-TEFb complex composed at least of Tat, P-TEFb (CDK9 and CCNT1), TAR RNA, RNA Pol II. Recruits the HATs CREBBP, TAF1/TFIID, EP300, PCAF and GCN5L2. Interacts with host KAT5/Tip60; this interaction targets the latter to degradation. Interacts with the host deacetylase SIRT1. Interacts with host capping enzyme RNGTT; this interaction stimulates RNGTT. Binds to host KDR, and to the host integrins ITGAV/ITGB3 and ITGA5/ITGB1. Interacts with host KPNB1/importin beta-1 without previous binding to KPNA1/importin alpha-1. Interacts with EIF2AK2. Interacts with host nucleosome assembly protein NAP1L1; this interaction may be required for the transport of Tat within the nucleus, since the two proteins interact at the nuclear rim. Interacts with host C1QBP/SF2P32; this interaction involves lysine-acetylated Tat. Interacts with the host chemokine receptors CCR2, CCR3 and CXCR4. Interacts with host DPP4/CD26; this interaction may trigger an anti-proliferative effect. Interacts with host LDLR. Interacts with the host extracellular matrix metalloproteinase MMP1. Interacts with host PRMT6; this interaction mediates Tat's methylation. Interacts with, and is ubiquitinated by MDM2/Hdm2. Interacts with host PSMC3 and HTATIP2. Interacts with STAB1; this interaction may overcome SATB1-mediated repression of IL2 and IL2RA (interleukin) in T cells by binding to the same domain than HDAC1. Interacts (when acetylated) with human CDK13, thereby increasing HIV-1 mRNA splicing and promoting the production of the doubly spliced HIV-1 protein Nef. Interacts with host TBP; this interaction modulates the activity of transcriptional pre-initiation complex. Interacts with host RELA. Interacts with host PLSCR1; this interaction negatively regulates Tat transactivation activity by altering its subcellular distribution. In terms of processing, asymmetrical arginine methylation by host PRMT6 seems to diminish the transactivation capacity of Tat and affects the interaction with host CCNT1. Acetylation by EP300, CREBBP, GCN5L2/GCN5 and PCAF regulates the transactivation activity of Tat. EP300-mediated acetylation of Lys-50 promotes dissociation of Tat from the TAR RNA through the competitive binding to PCAF's bromodomain. In addition, the non-acetylated Tat's N-terminus can also interact with PCAF. PCAF-mediated acetylation of Lys-28 enhances Tat's binding to CCNT1. Lys-50 is deacetylated by SIRT1. Post-translationally, polyubiquitination by host MDM2 does not target Tat to degradation, but activates its transactivation function and fosters interaction with CCNT1 and TAR RNA. In terms of processing, phosphorylated by EIF2AK2 on serine and threonine residues adjacent to the basic region important for TAR RNA binding and function. Phosphorylation of Tat by EIF2AK2 is dependent on the prior activation of EIF2AK2 by dsRNA.

It is found in the host nucleus. The protein resides in the host nucleolus. It localises to the host cytoplasm. Its subcellular location is the secreted. Transcriptional activator that increases RNA Pol II processivity, thereby increasing the level of full-length viral transcripts. Recognizes a hairpin structure at the 5'-LTR of the nascent viral mRNAs referred to as the transactivation responsive RNA element (TAR) and recruits the cyclin T1-CDK9 complex (P-TEFb complex) that will in turn hyperphosphorylate the RNA polymerase II to allow efficient elongation. The CDK9 component of P-TEFb and other Tat-activated kinases hyperphosphorylate the C-terminus of RNA Pol II that becomes stabilized and much more processive. Other factors such as HTATSF1/Tat-SF1, SUPT5H/SPT5, and HTATIP2 are also important for Tat's function. Besides its effect on RNA Pol II processivity, Tat induces chromatin remodeling of proviral genes by recruiting the histone acetyltransferases (HATs) CREBBP, EP300 and PCAF to the chromatin. This also contributes to the increase in proviral transcription rate, especially when the provirus integrates in transcriptionally silent region of the host genome. To ensure maximal activation of the LTR, Tat mediates nuclear translocation of NF-kappa-B by interacting with host RELA. Through its interaction with host TBP, Tat may also modulate transcription initiation. Tat can reactivate a latently infected cell by penetrating in it and transactivating its LTR promoter. In the cytoplasm, Tat is thought to act as a translational activator of HIV-1 mRNAs. Functionally, extracellular circulating Tat can be endocytosed by surrounding uninfected cells via the binding to several surface receptors such as CD26, CXCR4, heparan sulfate proteoglycans (HSPG) or LDLR. Neurons are rarely infected, but they internalize Tat via their LDLR. Through its interaction with nuclear HATs, Tat is potentially able to control the acetylation-dependent cellular gene expression. Modulates the expression of many cellular genes involved in cell survival, proliferation or in coding for cytokines or cytokine receptors. Tat plays a role in T-cell and neurons apoptosis. Tat induced neurotoxicity and apoptosis probably contribute to neuroAIDS. Circulating Tat also acts as a chemokine-like and/or growth factor-like molecule that binds to specific receptors on the surface of the cells, affecting many cellular pathways. In the vascular system, Tat binds to ITGAV/ITGB3 and ITGA5/ITGB1 integrins dimers at the surface of endothelial cells and competes with bFGF for heparin-binding sites, leading to an excess of soluble bFGF. The sequence is that of Protein Tat from Homo sapiens (Human).